A 430-amino-acid chain; its full sequence is Toxin coregulated pilus biosynthesis protein B (430 aa).

Residues 351–366 (NFSSESAKDSQGTTQK) are compositionally biased toward polar residues. The tract at residues 351–371 (NFSSESAKDSQGTTQKDGSKG) is disordered.

Functionally, involved in TCP pilus biogenesis. This Vibrio cholerae serotype O1 (strain ATCC 39315 / El Tor Inaba N16961) protein is Toxin coregulated pilus biosynthesis protein B (tcpB).